Reading from the N-terminus, the 580-residue chain is NADH-quinone oxidoreductase subunit C/D (580 aa).

The NADH dehydrogenase I subunit C stretch occupies residues 1–171 (MSLDQAIPEA…PPFVLTDRLF (171 aa)). The segment at 195–580 (ELMVLNFGPH…IDFVMSDVDR (386 aa)) is NADH dehydrogenase I subunit D.

The protein in the N-terminal section; belongs to the complex I 30 kDa subunit family. This sequence in the C-terminal section; belongs to the complex I 49 kDa subunit family. NDH-1 is composed of 13 different subunits. Subunits NuoB, CD, E, F, and G constitute the peripheral sector of the complex.

It is found in the cell inner membrane. It catalyses the reaction a quinone + NADH + 5 H(+)(in) = a quinol + NAD(+) + 4 H(+)(out). In terms of biological role, NDH-1 shuttles electrons from NADH, via FMN and iron-sulfur (Fe-S) centers, to quinones in the respiratory chain. The immediate electron acceptor for the enzyme in this species is believed to be ubiquinone. Couples the redox reaction to proton translocation (for every two electrons transferred, four hydrogen ions are translocated across the cytoplasmic membrane), and thus conserves the redox energy in a proton gradient. The protein is NADH-quinone oxidoreductase subunit C/D of Cereibacter sphaeroides (strain ATCC 17029 / ATH 2.4.9) (Rhodobacter sphaeroides).